Reading from the N-terminus, the 234-residue chain is Uridylate kinase (234 aa).

An ATP-binding site is contributed by 10–11 (GS). UMP is bound at residue G44. G45 and R49 together coordinate ATP. Residues D66 and 114-120 (ITPAQTT) each bind UMP. 3 residues coordinate ATP: T140, Y146, and D149.

This sequence belongs to the UMP kinase family. In terms of assembly, homohexamer.

It is found in the cytoplasm. It carries out the reaction UMP + ATP = UDP + ADP. It functions in the pathway pyrimidine metabolism; CTP biosynthesis via de novo pathway; UDP from UMP (UMPK route): step 1/1. Its activity is regulated as follows. Inhibited by UTP. Catalyzes the reversible phosphorylation of UMP to UDP. The polypeptide is Uridylate kinase (Methanoculleus marisnigri (strain ATCC 35101 / DSM 1498 / JR1)).